An 88-amino-acid chain; its full sequence is Large ribosomal subunit protein bL27 (88 aa).

Residues 1-21 (MAHKKGASSSRNGRDSAAQRL) form a disordered region.

The protein belongs to the bacterial ribosomal protein bL27 family.

The protein is Large ribosomal subunit protein bL27 of Mycobacterium sp. (strain MCS).